Here is a 203-residue protein sequence, read N- to C-terminus: Small ribosomal subunit protein uS4 (203 aa).

One can recognise an S4 RNA-binding domain in the interval 93-155; sequence RRLDSIVYRL…SKNLQQIRDA (63 aa).

The protein belongs to the universal ribosomal protein uS4 family. Part of the 30S ribosomal subunit. Contacts protein S5. The interaction surface between S4 and S5 is involved in control of translational fidelity.

In terms of biological role, one of the primary rRNA binding proteins, it binds directly to 16S rRNA where it nucleates assembly of the body of the 30S subunit. Functionally, with S5 and S12 plays an important role in translational accuracy. In Lactobacillus acidophilus (strain ATCC 700396 / NCK56 / N2 / NCFM), this protein is Small ribosomal subunit protein uS4.